The following is a 376-amino-acid chain: Dual-specificity RNA methyltransferase RlmN (376 aa).

Catalysis depends on glutamate 95, which acts as the Proton acceptor. Residues 101-339 form the Radical SAM core domain; that stretch reads EKERATLCVS…CIVRRPRGDD (239 aa). Cysteine 108 and cysteine 344 form a disulfide bridge. 3 residues coordinate [4Fe-4S] cluster: cysteine 115, cysteine 119, and cysteine 122. Residues 169–170, serine 201, 223–225, and asparagine 301 contribute to the S-adenosyl-L-methionine site; these read GE and SLH. Cysteine 344 serves as the catalytic S-methylcysteine intermediate.

It belongs to the radical SAM superfamily. RlmN family. [4Fe-4S] cluster serves as cofactor.

It is found in the cytoplasm. It carries out the reaction adenosine(2503) in 23S rRNA + 2 reduced [2Fe-2S]-[ferredoxin] + 2 S-adenosyl-L-methionine = 2-methyladenosine(2503) in 23S rRNA + 5'-deoxyadenosine + L-methionine + 2 oxidized [2Fe-2S]-[ferredoxin] + S-adenosyl-L-homocysteine. It catalyses the reaction adenosine(37) in tRNA + 2 reduced [2Fe-2S]-[ferredoxin] + 2 S-adenosyl-L-methionine = 2-methyladenosine(37) in tRNA + 5'-deoxyadenosine + L-methionine + 2 oxidized [2Fe-2S]-[ferredoxin] + S-adenosyl-L-homocysteine. In terms of biological role, specifically methylates position 2 of adenine 2503 in 23S rRNA and position 2 of adenine 37 in tRNAs. m2A2503 modification seems to play a crucial role in the proofreading step occurring at the peptidyl transferase center and thus would serve to optimize ribosomal fidelity. The sequence is that of Dual-specificity RNA methyltransferase RlmN from Pseudoalteromonas translucida (strain TAC 125).